Here is a 413-residue protein sequence, read N- to C-terminus: uncharacterized protein (413 aa).

The protein belongs to the mimivirus L17x/L18x family.

This is an uncharacterized protein from Acanthamoeba polyphaga (Amoeba).